The sequence spans 131 residues: SPbeta prophage-derived uncharacterized protein YosD (131 aa).

The tract at residues 102 to 131 is disordered; that stretch reads EHNNKKAKNNDTQNQRQIKTSWWQRLTKKD. Positions 111-125 are enriched in polar residues; it reads NDTQNQRQIKTSWWQ.

This is SPbeta prophage-derived uncharacterized protein YosD (yosD) from Bacillus subtilis (strain 168).